The primary structure comprises 217 residues: Very-long-chain (3R)-3-hydroxyacyl-CoA dehydratase PHS1 (217 aa).

The Cytoplasmic segment spans residues 1–11; that stretch reads MSKKLASPLSF. Residues 12-29 traverse the membrane as a helical segment; the sequence is LPLYNLLSAVGWSYLLYL. The Lumenal segment spans residues 30-47; the sequence is VISLYPKVGQPAFFYQTK. A helical transmembrane segment spans residues 48–66; that stretch reads NVATLVQCGAIIEIINSFL. At 67 to 76 the chain is on the cytoplasmic side; it reads GVVRSPLLTT. A helical membrane pass occupies residues 77 to 94; it reads VAQVSSRLLVVLGIFQLL. Topologically, residues 95–99 are lumenal; it reads PNTSG. A helical membrane pass occupies residues 100–117; the sequence is VQSVVYISLLLAWSITEI. Over 118–142 the chain is Cytoplasmic; the sequence is VRYLYYFFMLVFKNGAPKILILLRY. A helical membrane pass occupies residues 143-160; it reads NLFWILYPTGVASELRII. Catalysis depends on residues Y149 and E156. Over 161-178 the chain is Lumenal; that stretch reads YCALNAAESQYSLLYKRI. A helical transmembrane segment spans residues 179–196; that stretch reads LIAAMLAYIPGFPMLFLH. The Cytoplasmic segment spans residues 197–217; that stretch reads MVAQRKKVMKSLRSSFGKKLI. Positions 214 to 217 match the Endoplasmic reticulum retention signal motif; sequence KKLI.

The protein belongs to the very long-chain fatty acids dehydratase HACD family.

The protein resides in the endoplasmic reticulum membrane. It localises to the vacuole membrane. The enzyme catalyses a very-long-chain (3R)-3-hydroxyacyl-CoA = a very-long-chain (2E)-enoyl-CoA + H2O. It catalyses the reaction (3R)-hydroxyeicosanoyl-CoA = (2E)-eicosenoyl-CoA + H2O. The catalysed reaction is (3R)-hydroxydocosanoyl-CoA = (2E)-docosenoyl-CoA + H2O. It carries out the reaction (3R)-hydroxyoctadecanoyl-CoA = (2E)-octadecenoyl-CoA + H2O. The enzyme catalyses (3R)-hydroxytetracosanoyl-CoA = (2E)-tetracosenoyl-CoA + H2O. It catalyses the reaction (3R)-hydroxyhexacosanoyl-CoA = (2E)-hexacosenoyl-CoA + H2O. The catalysed reaction is (3R)-hydroxyhexadecanoyl-CoA = (2E)-hexadecenoyl-CoA + H2O. It functions in the pathway lipid metabolism; fatty acid biosynthesis. Its function is as follows. Catalyzes the third of the four reactions of the long-chain fatty acids elongation cycle. This endoplasmic reticulum-bound enzymatic process, allows the addition of two carbons to the chain of long- and very long-chain fatty acids/VLCFAs per cycle. This enzyme catalyzes the dehydration of the 3-hydroxyacyl-CoA intermediate into trans-2,3-enoyl-CoA, within each cycle of fatty acid elongation. Thereby, it participates in the production of VLCFAs of different chain lengths that are involved in multiple biological processes as precursors of membrane lipids and lipid mediators. The sequence is that of Very-long-chain (3R)-3-hydroxyacyl-CoA dehydratase PHS1 (PHS1) from Saccharomyces cerevisiae (strain ATCC 204508 / S288c) (Baker's yeast).